Here is a 98-residue protein sequence, read N- to C-terminus: NADH-ubiquinone oxidoreductase chain 4L (98 aa).

3 helical membrane passes run 1–21 (MALT…GLLM), 29–49 (SLLC…LTIL), and 61–81 (IILL…LVMV).

Belongs to the complex I subunit 4L family. As to quaternary structure, core subunit of respiratory chain NADH dehydrogenase (Complex I) which is composed of 45 different subunits.

It is found in the mitochondrion inner membrane. It carries out the reaction a ubiquinone + NADH + 5 H(+)(in) = a ubiquinol + NAD(+) + 4 H(+)(out). Functionally, core subunit of the mitochondrial membrane respiratory chain NADH dehydrogenase (Complex I) which catalyzes electron transfer from NADH through the respiratory chain, using ubiquinone as an electron acceptor. Part of the enzyme membrane arm which is embedded in the lipid bilayer and involved in proton translocation. The sequence is that of NADH-ubiquinone oxidoreductase chain 4L (MT-ND4L) from Pteropus dasymallus (Ryukyu flying fox).